The following is a 255-amino-acid chain: MNILPYEIHLLVIDYLYNDDLSIYFVNKYFFSMLKHSKIQNTIIKKIIKKGELGVIRYINKLFRVNDELVIGNKLFESSGINNYLLTACKYGHCKLVKYFVECGADIHYKTDYALQLACKYGYLEIVKYLVKKGANINTDDCYAVQLASREGHLKIVKYLVELGTNVRKDRDLAFRWSVENNHLSVTKYLVELGSDVRSEKNYAIKKSCEYGYFEMTQYLMNQGANFRVDNDYAVRFASKKWTFKYCRIFDIMWR.

5 ANK repeats span residues 79 to 109 (SGIN…DIHY), 110 to 139 (KTDY…NINT), 141 to 169 (DCYA…NVRK), 171 to 199 (RDLA…DVRS), and 201 to 229 (KNYA…NFRV).

The sequence is that of Putative ankyrin repeat protein R880 from Acanthamoeba polyphaga (Amoeba).